Consider the following 331-residue polypeptide: MNIVYFGTPEFALAPLQRLLQTETYQVLGVVTQPDRRRGRGNQLSPSPVKAFALRHGLPIWQPPRLRQDPQLPEVLRSLAADVFVVVAYGQILPQSILDIPRYGCINIHGSLLPRYRGAAPIQWALYHGEEETGVTTMLMDAGLDTGPMLLKRKVRIHLEDNATTLSAKLSETGADLLLDTLQQLPQLQAEPQNDAEATYAPLIQKSDYAIDWGRSALALHNQVRAFYPYAYTQWQGTALKILQTWPLIPEVAAKLPEPLQSYVREPEAAAPPGTVLALIKGWGPVVQTGKGPLLLSQVQLSGRKAQSGWDFVNGVRLAIATQFAIVPSAL.

111 to 114 (SLLP) contacts (6S)-5,6,7,8-tetrahydrofolate.

The protein belongs to the Fmt family.

It catalyses the reaction L-methionyl-tRNA(fMet) + (6R)-10-formyltetrahydrofolate = N-formyl-L-methionyl-tRNA(fMet) + (6S)-5,6,7,8-tetrahydrofolate + H(+). Functionally, attaches a formyl group to the free amino group of methionyl-tRNA(fMet). The formyl group appears to play a dual role in the initiator identity of N-formylmethionyl-tRNA by promoting its recognition by IF2 and preventing the misappropriation of this tRNA by the elongation apparatus. This is Methionyl-tRNA formyltransferase from Thermosynechococcus vestitus (strain NIES-2133 / IAM M-273 / BP-1).